An 84-amino-acid polypeptide reads, in one-letter code: Large ribosomal subunit protein bL31 (84 aa).

Cysteine 16, cysteine 18, cysteine 38, and cysteine 41 together coordinate Zn(2+).

The protein belongs to the bacterial ribosomal protein bL31 family. Type A subfamily. Part of the 50S ribosomal subunit. Zn(2+) is required as a cofactor.

In terms of biological role, binds the 23S rRNA. The chain is Large ribosomal subunit protein bL31 from Mycobacterium leprae (strain Br4923).